A 331-amino-acid polypeptide reads, in one-letter code: Ferrochelatase (331 aa).

Positions 187 and 286 each coordinate Fe cation.

Belongs to the ferrochelatase family.

It is found in the cytoplasm. It catalyses the reaction heme b + 2 H(+) = protoporphyrin IX + Fe(2+). It participates in porphyrin-containing compound metabolism; protoheme biosynthesis; protoheme from protoporphyrin-IX: step 1/1. In terms of biological role, catalyzes the ferrous insertion into protoporphyrin IX. The protein is Ferrochelatase of Legionella pneumophila subsp. pneumophila (strain Philadelphia 1 / ATCC 33152 / DSM 7513).